The chain runs to 245 residues: UPF0246 protein CE1889 (245 aa).

The disordered stretch occupies residues M1–L20.

It belongs to the UPF0246 family.

The sequence is that of UPF0246 protein CE1889 from Corynebacterium efficiens (strain DSM 44549 / YS-314 / AJ 12310 / JCM 11189 / NBRC 100395).